Here is a 1489-residue protein sequence, read N- to C-terminus: ZEB2-regulated ABC transporter 1 (1489 aa).

Residues Met-1–Glu-55 form a disordered region. A glycan (N-linked (GlcNAc...) asparagine) is linked at Asn-7. Residues Ser-44–Gln-53 are compositionally biased toward acidic residues. N-linked (GlcNAc...) asparagine glycosylation is found at Asn-70, Asn-73, Asn-118, Asn-332, and Asn-469. Positions Leu-152–Asp-408 constitute an ABC transporter 1 domain. 5 helical membrane passes run Leu-513–Ile-533, Gly-552–Thr-572, Ile-599–Phe-619, Gly-628–Phe-648, and Met-662–Val-682. The N-linked (GlcNAc...) asparagine glycan is linked to Asn-714. The chain crosses the membrane as a helical span at residues Gly-773 to Ile-793. The disordered stretch occupies residues Pro-811 to Asn-834. Residues Glu-819–Asn-834 show a composition bias toward polar residues. Residues Phe-846–Gly-1088 form the ABC transporter 2 domain. An ATP-binding site is contributed by Gly-882–Thr-889. 5 helical membrane-spanning segments follow: residues Ala-1190 to Leu-1210, Phe-1218 to Phe-1238, Ile-1269 to Phe-1289, Trp-1307 to Ile-1327, and Ala-1333 to Ala-1353. Residue Asn-1402 is glycosylated (N-linked (GlcNAc...) asparagine). The helical transmembrane segment at Gly-1457–Ile-1477 threads the bilayer.

The protein belongs to the ABC transporter superfamily. ABCG family. PDR (TC 3.A.1.205) subfamily.

The protein localises to the cell membrane. It is found in the vacuole membrane. Functionally, ABC transporter involved in zearalenone production. This chain is ZEB2-regulated ABC transporter 1, found in Gibberella zeae (strain ATCC MYA-4620 / CBS 123657 / FGSC 9075 / NRRL 31084 / PH-1) (Wheat head blight fungus).